Consider the following 247-residue polypeptide: Cross-pathway control protein 1 (247 aa).

Composition is skewed to low complexity over residues 107-129 (DAET…AAQA) and 145-169 (RPSQ…SGVS). The segment at 107 to 213 (DAETSAAPAP…RARKAERMDE (107 aa)) is disordered. Residues 186–247 (SDTVGMKRAK…LASSQGAAGQ (62 aa)) enclose the bZIP domain. The tract at residues 192–210 (KRAKNTLAARKSRARKAER) is basic motif. The interval 214 to 228 (LERQVRELEAEKEKL) is leucine-zipper.

Belongs to the bZIP family. GCN4 subfamily. In terms of assembly, binds DNA as a dimer.

Its subcellular location is the nucleus. General amino acid control transactivator. Binds to the AP-1 consensus DNA binding element 5'-[AG]TGACTCAT-3'. This is Cross-pathway control protein 1 (CPC-1) from Cryphonectria parasitica (Chestnut blight fungus).